Reading from the N-terminus, the 428-residue chain is MHDIRAIRENPEAFDRDLERRGLSPLSAELIALDDARKGAVSAAQAAQERRNALSKEIGAAKKAKDEARAAELMAEVARLKEEAPGLDAAQAQAAKVLDERLAAIPNQPKADVPLGADEHGNVEYRRFDSSRARLAEGRQHFELGEATGLMDFEAAAKLSGSRFVVLKGPLARLERALGQFMLDLHTGEHGYTEVVPPVLVRDEAMFGTAQLPKFRDDQFAAGDGFWLIPTAEVPLTNLVRENILAEDELPLRFTALTPCFRAEAGAAGRDTRGMLRQHQFNKVELVSITAPEKSAEEHERMLACAEAVLQKLDLTYRVMTLCTGDMGFASQKTYDIEVWVPGQQTYREISSCSVCGEFQARRMNARYRAKEGRGVGFVHTLNGSGVAVGRALIAVMENYQNPDGSVTIPSVLQPYMGGLNRIEGPNT.

231 to 233 contacts L-serine; that stretch reads TAE. 262–264 contacts ATP; the sequence is RAE. Glu-285 is a binding site for L-serine. 349–352 is a binding site for ATP; the sequence is EISS. Ser-385 is a binding site for L-serine.

This sequence belongs to the class-II aminoacyl-tRNA synthetase family. Type-1 seryl-tRNA synthetase subfamily. In terms of assembly, homodimer. The tRNA molecule binds across the dimer.

The protein localises to the cytoplasm. The catalysed reaction is tRNA(Ser) + L-serine + ATP = L-seryl-tRNA(Ser) + AMP + diphosphate + H(+). It carries out the reaction tRNA(Sec) + L-serine + ATP = L-seryl-tRNA(Sec) + AMP + diphosphate + H(+). It functions in the pathway aminoacyl-tRNA biosynthesis; selenocysteinyl-tRNA(Sec) biosynthesis; L-seryl-tRNA(Sec) from L-serine and tRNA(Sec): step 1/1. Catalyzes the attachment of serine to tRNA(Ser). Is also able to aminoacylate tRNA(Sec) with serine, to form the misacylated tRNA L-seryl-tRNA(Sec), which will be further converted into selenocysteinyl-tRNA(Sec). The protein is Serine--tRNA ligase of Methylorubrum populi (strain ATCC BAA-705 / NCIMB 13946 / BJ001) (Methylobacterium populi).